A 443-amino-acid polypeptide reads, in one-letter code: Putative phosphoribosyl transferase MT0597 (443 aa).

It in the N-terminal section; belongs to the purine/pyrimidine phosphoribosyltransferase family. In the C-terminal section; belongs to the dienelactone hydrolase family.

The protein is Putative phosphoribosyl transferase MT0597 of Mycobacterium tuberculosis (strain CDC 1551 / Oshkosh).